A 146-amino-acid chain; its full sequence is Protein archease (146 aa).

Positions 16, 145, and 146 each coordinate Ca(2+).

Belongs to the archease family.

Activates the tRNA-splicing ligase complex by facilitating the enzymatic turnover of catalytic subunit RtcB. Acts by promoting the guanylylation of RtcB, a key intermediate step in tRNA ligation. Can also alter the NTP specificity of RtcB such that ATP, dGTP or ITP is used efficiently. This is Protein archease from Methanosarcina mazei (strain ATCC BAA-159 / DSM 3647 / Goe1 / Go1 / JCM 11833 / OCM 88) (Methanosarcina frisia).